The chain runs to 299 residues: Ribosome-inactivating protein saporin-6 (299 aa).

An N-terminal signal peptide occupies residues 1-24; it reads MKIYVVATIAWILLQFSAWTTTDA. The active site involves Glu200. Residues 278 to 299 constitute a propeptide that is removed on maturation; that stretch reads SSNEANSTVRHYGPLKPTLLIT. Asn283 is a glycosylation site (N-linked (GlcNAc...) asparagine).

This sequence belongs to the ribosome-inactivating protein family. Type 1 RIP subfamily. As to expression, seeds and leaves of the plant.

It carries out the reaction Endohydrolysis of the N-glycosidic bond at one specific adenosine on the 28S rRNA.. Its function is as follows. Ribosome-inactivating protein of type 1, inhibits protein synthesis in animal cells. Useful as immunotoxin for pharmacological applications. The sequence is that of Ribosome-inactivating protein saporin-6 (SAP6) from Saponaria officinalis (Common soapwort).